Consider the following 177-residue polypeptide: UPF0251 protein Cag_0886 (177 aa).

The interval Gly-147–Glu-177 is disordered.

This sequence belongs to the UPF0251 family.

In Chlorobium chlorochromatii (strain CaD3), this protein is UPF0251 protein Cag_0886.